The following is an 892-amino-acid chain: MKKLTTNEIRKMWLDFFKEKNHHFLEPVSLIPVEDPSLLWINSGVATLKPYFDGRKTPPSPRLTNSQKAIRTNDIENVGVTARHHTMFEMLGNFSIGDYFKKEAISFAWELLTSDKWFAIPVEKLYITVFNEDIEAYEYWINDIGIKQDHIFRLTRDTNFWDVGQGPCGPNTEIFFDRGEKWDKENIGPRLLAEDIENDRYIEIWNIVFSQFNNDGFNNYSELPRKNIDTGAGLERIASIFQDTPTNFETDIFWPTIKQIENICDANFKYSIENYFDEKAEQTKINTAFKVIADHVRATSFAIADGVFPGNKDRGYIIRRLIRRALMKGMELGINGPFLSTLVINVIDVMKDFYPYLLEKQNLIETTILIEEEKFLKTLSKGYEALNKMIENDKKVTGKNALLLFESYGYPIEQTIEIAEDRKVKVEIEEFNSLLEQAKEQARNARKDLKAWDKQNEIFTKINVESEFTGWEETSHKNAKIVYIFTDDEILTEATDKEVYVILDKTPFYAEKGGQAADKGYLVNKEARCEVIDTQQGPNHQHIHKILLDGSIKIGDQIDAFVDETKRTLTMKNHSGTHLIHSALRVVLGETVMQSGSYNDEHGLRMDFTYNDSIKAEELIAAEKLVLDKINEKINREVYFCSMKDAVSKYGALAFFTEKYDDIVRVVKFGDFSSELCGGTHVDNTIDIEDFMITGLESKGSGVYRVKCLTSKKAINEYLNTEFNKLLKLIQEQNSKYENTKLIQADQNIENIVKESVTKTISKESIQELKLILEKLSAALKIYERKIEDLLTSKKLEQFKAFEPITNDKGVGTIEQQVNGLNIKDMKNLVDEYKNKFEKLIIILTSETEEGNFVVVGVSEKIQNEYSAIEIFKNLTISPKGGGNSSLAQGKF.

Histidine 574, histidine 578, cysteine 677, and histidine 681 together coordinate Zn(2+).

The protein belongs to the class-II aminoacyl-tRNA synthetase family. Requires Zn(2+) as cofactor.

The protein localises to the cytoplasm. The catalysed reaction is tRNA(Ala) + L-alanine + ATP = L-alanyl-tRNA(Ala) + AMP + diphosphate. Functionally, catalyzes the attachment of alanine to tRNA(Ala) in a two-step reaction: alanine is first activated by ATP to form Ala-AMP and then transferred to the acceptor end of tRNA(Ala). Also edits incorrectly charged Ser-tRNA(Ala) and Gly-tRNA(Ala) via its editing domain. The polypeptide is Alanine--tRNA ligase (Mesoplasma florum (strain ATCC 33453 / NBRC 100688 / NCTC 11704 / L1) (Acholeplasma florum)).